Reading from the N-terminus, the 524-residue chain is GMP synthase [glutamine-hydrolyzing] (524 aa).

The 190-residue stretch at 7–196 folds into the Glutamine amidotransferase type-1 domain; that stretch reads PVLVVDFGAQ…LHELAGIPAS (190 aa). Residue cysteine 84 is the Nucleophile of the active site. Catalysis depends on residues histidine 170 and glutamate 172. Residues 197–398 enclose the GMPS ATP-PPase domain; it reads WTPSNIADVL…LGLPEEIVAR (202 aa). Position 224-230 (224-230) interacts with ATP; that stretch reads SGGVDSA.

As to quaternary structure, homodimer.

The catalysed reaction is XMP + L-glutamine + ATP + H2O = GMP + L-glutamate + AMP + diphosphate + 2 H(+). It functions in the pathway purine metabolism; GMP biosynthesis; GMP from XMP (L-Gln route): step 1/1. Its function is as follows. Catalyzes the synthesis of GMP from XMP. The chain is GMP synthase [glutamine-hydrolyzing] from Nocardia farcinica (strain IFM 10152).